A 514-amino-acid polypeptide reads, in one-letter code: Peptide chain release factor 3 (514 aa).

In terms of domain architecture, tr-type G spans 8 to 268 (KKRRTFAIIS…TFLEFAPEPH (261 aa)). Residues 17–24 (SHPDAGKT), 85–89 (DTPGH), and 139–142 (NKLD) each bind GTP.

This sequence belongs to the TRAFAC class translation factor GTPase superfamily. Classic translation factor GTPase family. PrfC subfamily.

It is found in the cytoplasm. Increases the formation of ribosomal termination complexes and stimulates activities of RF-1 and RF-2. It binds guanine nucleotides and has strong preference for UGA stop codons. It may interact directly with the ribosome. The stimulation of RF-1 and RF-2 is significantly reduced by GTP and GDP, but not by GMP. This chain is Peptide chain release factor 3, found in Streptococcus pyogenes serotype M1.